Reading from the N-terminus, the 165-residue chain is Shikimate kinase (165 aa).

Residue 11-16 participates in ATP binding; that stretch reads GAGKTT. T15 is a Mg(2+) binding site. D33, R57, and G78 together coordinate substrate. R116 is an ATP binding site. R134 is a binding site for substrate.

Belongs to the shikimate kinase family. In terms of assembly, monomer. It depends on Mg(2+) as a cofactor.

The protein resides in the cytoplasm. The enzyme catalyses shikimate + ATP = 3-phosphoshikimate + ADP + H(+). It participates in metabolic intermediate biosynthesis; chorismate biosynthesis; chorismate from D-erythrose 4-phosphate and phosphoenolpyruvate: step 5/7. In terms of biological role, catalyzes the specific phosphorylation of the 3-hydroxyl group of shikimic acid using ATP as a cosubstrate. The chain is Shikimate kinase from Bacillus cytotoxicus (strain DSM 22905 / CIP 110041 / 391-98 / NVH 391-98).